The chain runs to 345 residues: UDP-3-O-acylglucosamine N-acyltransferase 3 (345 aa).

Residue His-236 is the Proton acceptor of the active site.

Belongs to the transferase hexapeptide repeat family. LpxD subfamily. In terms of assembly, homotrimer.

The enzyme catalyses a UDP-3-O-[(3R)-3-hydroxyacyl]-alpha-D-glucosamine + a (3R)-hydroxyacyl-[ACP] = a UDP-2-N,3-O-bis[(3R)-3-hydroxyacyl]-alpha-D-glucosamine + holo-[ACP] + H(+). Its pathway is bacterial outer membrane biogenesis; LPS lipid A biosynthesis. Catalyzes the N-acylation of UDP-3-O-acylglucosamine using 3-hydroxyacyl-ACP as the acyl donor. Is involved in the biosynthesis of lipid A, a phosphorylated glycolipid that anchors the lipopolysaccharide to the outer membrane of the cell. The polypeptide is UDP-3-O-acylglucosamine N-acyltransferase 3 (Gloeobacter violaceus (strain ATCC 29082 / PCC 7421)).